The following is a 339-amino-acid chain: MLEDRRLEVLRAIVEDFVLSNEPVGSKALAERHNLGVSPATVRNDMSALEEEGYITQPHTSAGRIPTDKGYRLFVDRLSGVKPLSRAERRAIQSFLEGAVDLDDVVRRSVRLLAQLTRQVAVVQYPSLSSSSIRHIEVVTLGPYRLLMVLITDTGRVEQRIVDSLVPVDDEVAGELRSVLNCALAGRRLVDAPDIVAALPDSTRSELRPYLTTVAGAVLESLVERQEERIAMAGTANLTRSPVDFADSLRSILEALEEQVVLMKLIGSARETGTVTVRIGRETDVDALRSTAVVATGYGRGPFALGGMGVLGPMRMDYPGTMAAVRAVAKYVGELLGAD.

It belongs to the HrcA family.

In terms of biological role, negative regulator of class I heat shock genes (grpE-dnaK-dnaJ and groELS operons). Prevents heat-shock induction of these operons. This is Heat-inducible transcription repressor HrcA from Frankia casuarinae (strain DSM 45818 / CECT 9043 / HFP020203 / CcI3).